The sequence spans 424 residues: Serine--tRNA ligase (424 aa).

An L-serine-binding site is contributed by 230–232 (TAE). Position 261 to 263 (261 to 263 (RSE)) interacts with ATP. An L-serine-binding site is contributed by glutamate 284. 348–351 (EISS) is a binding site for ATP. Serine 384 contributes to the L-serine binding site.

It belongs to the class-II aminoacyl-tRNA synthetase family. Type-1 seryl-tRNA synthetase subfamily. Homodimer. The tRNA molecule binds across the dimer.

Its subcellular location is the cytoplasm. The catalysed reaction is tRNA(Ser) + L-serine + ATP = L-seryl-tRNA(Ser) + AMP + diphosphate + H(+). It carries out the reaction tRNA(Sec) + L-serine + ATP = L-seryl-tRNA(Sec) + AMP + diphosphate + H(+). It participates in aminoacyl-tRNA biosynthesis; selenocysteinyl-tRNA(Sec) biosynthesis; L-seryl-tRNA(Sec) from L-serine and tRNA(Sec): step 1/1. Functionally, catalyzes the attachment of serine to tRNA(Ser). Is also able to aminoacylate tRNA(Sec) with serine, to form the misacylated tRNA L-seryl-tRNA(Sec), which will be further converted into selenocysteinyl-tRNA(Sec). This is Serine--tRNA ligase from Streptococcus pneumoniae (strain ATCC 700669 / Spain 23F-1).